We begin with the raw amino-acid sequence, 340 residues long: KRR1 small subunit processome component homolog (340 aa).

In terms of domain architecture, KH spans 124–192; sequence DIIKIGNLVH…VRDIVLETMN (69 aa). Over residues 228 to 244 the composition is skewed to basic residues; the sequence is KNKNISKRKQPKSKKPK. Disordered regions lie at residues 228–259 and 271–324; these read KNKN…ESKI and NQEQ…KVDV. The stretch at 269-302 forms a coiled coil; it reads FLNQEQKQAKRNQERSAKQADAAKKQDERRNKDF. 2 stretches are compositionally biased toward basic and acidic residues: residues 275–301 and 309–324; these read KQAK…RNKD and APSR…KVDV.

The protein belongs to the KRR1 family. Monomer. Component of the ribosomal small subunit (SSU) processome.

The protein localises to the nucleus. Its subcellular location is the nucleolus. Required for 40S ribosome biogenesis. Involved in nucleolar processing of pre-18S ribosomal RNA and ribosome assembly. Binds to RNA. Required for female germline development, cell viability during eye development and for survival of dividing cells and epithelial cells during early wing disk development. The chain is KRR1 small subunit processome component homolog from Drosophila persimilis (Fruit fly).